Here is a 190-residue protein sequence, read N- to C-terminus: Elongation factor P-like protein (190 aa).

This sequence belongs to the elongation factor P family.

The protein is Elongation factor P-like protein of Escherichia fergusonii (strain ATCC 35469 / DSM 13698 / CCUG 18766 / IAM 14443 / JCM 21226 / LMG 7866 / NBRC 102419 / NCTC 12128 / CDC 0568-73).